A 101-amino-acid polypeptide reads, in one-letter code: Urease subunit beta (101 aa).

It belongs to the urease beta subunit family. In terms of assembly, heterotrimer of UreA (gamma), UreB (beta) and UreC (alpha) subunits. Three heterotrimers associate to form the active enzyme.

It is found in the cytoplasm. The enzyme catalyses urea + 2 H2O + H(+) = hydrogencarbonate + 2 NH4(+). The protein operates within nitrogen metabolism; urea degradation; CO(2) and NH(3) from urea (urease route): step 1/1. The sequence is that of Urease subunit beta from Actinobacillus pleuropneumoniae serotype 7 (strain AP76).